We begin with the raw amino-acid sequence, 563 residues long: Arginine--tRNA ligase (563 aa).

The 'HIGH' region signature appears at P120 to H130.

Belongs to the class-I aminoacyl-tRNA synthetase family. As to quaternary structure, monomer.

The protein localises to the cytoplasm. The enzyme catalyses tRNA(Arg) + L-arginine + ATP = L-arginyl-tRNA(Arg) + AMP + diphosphate. This is Arginine--tRNA ligase from Clostridium botulinum (strain Okra / Type B1).